The following is a 387-amino-acid chain: Probable nitrate transporter NarT (387 aa).

Helical transmembrane passes span 14–34 (TLSL…MPFI), 45–65 (ISVI…PFGY), 69–89 (IVGA…PIFL), 97–117 (GMLM…SVGV), 137–157 (GVGN…AGAI), 161–181 (NTVR…FFLG), 211–231 (WYFI…NFLV), 246–266 (GIFI…GDKF), 268–288 (AVQA…ILSL), 294–314 (LFTI…GLIF), 330–350 (GIVS…ITFV), and 358–378 (HLAF…MIHL).

Belongs to the major facilitator superfamily. Nitrate/nitrite porter (TC 2.A.1.8) family.

It localises to the cell membrane. Its function is as follows. Probably required for nitrate uptake under anoxic conditions. Also possibly involved in excretion of nitrite produced by the dissimilatory reduction of nitrate. The protein is Probable nitrate transporter NarT (narT) of Staphylococcus epidermidis (strain ATCC 35984 / DSM 28319 / BCRC 17069 / CCUG 31568 / BM 3577 / RP62A).